Here is a 428-residue protein sequence, read N- to C-terminus: Ribosomal RNA small subunit methyltransferase B (428 aa).

Residues 253 to 259, Asp-276, Asp-302, and Asp-321 each bind S-adenosyl-L-methionine; that span reads CAAPGGK. Cys-374 functions as the Nucleophile in the catalytic mechanism.

Belongs to the class I-like SAM-binding methyltransferase superfamily. RsmB/NOP family.

The protein resides in the cytoplasm. The enzyme catalyses cytidine(967) in 16S rRNA + S-adenosyl-L-methionine = 5-methylcytidine(967) in 16S rRNA + S-adenosyl-L-homocysteine + H(+). Its function is as follows. Specifically methylates the cytosine at position 967 (m5C967) of 16S rRNA. The sequence is that of Ribosomal RNA small subunit methyltransferase B from Citrobacter koseri (strain ATCC BAA-895 / CDC 4225-83 / SGSC4696).